We begin with the raw amino-acid sequence, 928 residues long: Mitogen-activated protein kinase kinase kinase dlk-1 (928 aa).

The tract at residues 1–72 (MTSTTMVTTL…GQKEGSPDPK (72 aa)) is disordered. Positions 42-52 (LVTQSAPNTPI) are enriched in polar residues. Residues 53-69 (QHREQANAEFGQKEGSP) show a composition bias toward basic and acidic residues. In terms of domain architecture, Protein kinase spans 135-377 (ISELEWLGSG…FSHIRQHWEI (243 aa)). ATP contacts are provided by residues 141-149 (LGSGSQGAV) and K162. D246 acts as the Proton acceptor in catalysis. Residues 459–480 (LQGCFTELKLKESELAEWEKDL) form a leucine-zipper region. 3 disordered regions span residues 483 to 575 (REQW…DAIR), 644 to 696 (RRVS…PSRN), and 802 to 845 (ENAN…SMES). Residues 509 to 519 (GYDDMSSDEDV) are compositionally biased toward acidic residues. Positions 530–557 (SNTSSSSGVQSSPFSRQSSSRSSAGQQT) are enriched in low complexity. An important for interaction between isoform a and isoform c region spans residues 605–814 (SAGAGSCTAI…NDVDLTSSMD (210 aa)). Polar residues predominate over residues 647-656 (STSVNKSTAV). Over residues 677 to 695 (SCSSPRSSSKLNRSSYPSR) the composition is skewed to low complexity. A compositionally biased stretch (acidic residues) spans 823 to 833 (ADVESSEEDEG). Residues S874 and S878 each carry the phosphoserine modification. The short motif at 874 to 879 (SDGLSD) is the SDGLSD hexapeptide element.

This sequence belongs to the protein kinase superfamily. STE Ser/Thr protein kinase family. MAP kinase kinase kinase subfamily. As to quaternary structure, homooligomer (via leucine zipper domain and hexapeptide motif). Isoform a (via leucine zipper domain) forms a heterooligomer with isoform c (via leucine zipper domain). Isoform c does not self-associate. Mg(2+) is required as a cofactor. Ubiquitinated by rpm-1. Negatively regulated by ubiquitination by fsn-1 bound rpm-1, followed by degradation. Post-translationally, phosphorylation at Ser-874 and/or at Ser-878 abolishes interaction with isoform c and promotes binding to isoform a kinase domain (likely in trans) resulting in isoform a self-association and activation. As to expression, expressed in nerve ring, nerve cord, neurons, and pharynx.

Its subcellular location is the synapse. The protein resides in the cytoplasm. The protein localises to the cell projection. It localises to the axon. It is found in the dendrite. Its subcellular location is the cilium. It carries out the reaction L-seryl-[protein] + ATP = O-phospho-L-seryl-[protein] + ADP + H(+). It catalyses the reaction L-threonyl-[protein] + ATP = O-phospho-L-threonyl-[protein] + ADP + H(+). Its activity is regulated as follows. Inactive when associated with isoform c. Dissociation from isoform c, which is dependent on the phosphorylation of the C-terminal hexapeptide, results in self-association and activation. Transient increase in Ca(2+) levels caused by axonal injury or synaptic activity triggers the dissociation of isoform a from isoform c; the dissociation may be influenced by the phosphorylation status of the C-terminal hexapeptide. Its function is as follows. Component of a MAP kinase pathway that functions presynaptically to regulate synaptic architecture and presynaptic differentiation. Phosphorylates and activates mkk-4. Has a role in axonal regrowth following injury and synaptogenesis. Plays a role in modulating polymerization of neuronal microtubules. Also promotes tubulin post-translational modifications that protect microtubules. Plays a role in cilium length regulation, possibly by reducing rab-5 mediated endocytosis, and may also have a role in intraflagellar transport in cilia. Plays a role in the formation of muscle connections, also called muscle arm extensions, between the body wall and the motor axons in the dorsal and ventral cord. In terms of biological role, has a role in synapse and axon development, and in axonal regrowth following injury. Functionally, by forming heterooligomers with isoform a, acts as an inhibitor of isoform a activation. Its inhibitory function is independent of its catalytic activity. This Caenorhabditis elegans protein is Mitogen-activated protein kinase kinase kinase dlk-1 (dlk-1).